Here is a 316-residue protein sequence, read N- to C-terminus: 4-hydroxy-3-methylbut-2-enyl diphosphate reductase (316 aa).

Cysteine 12 is a binding site for [4Fe-4S] cluster. (2E)-4-hydroxy-3-methylbut-2-enyl diphosphate contacts are provided by histidine 41 and histidine 74. Positions 41 and 74 each coordinate dimethylallyl diphosphate. Positions 41 and 74 each coordinate isopentenyl diphosphate. Residue cysteine 96 participates in [4Fe-4S] cluster binding. Residue histidine 124 coordinates (2E)-4-hydroxy-3-methylbut-2-enyl diphosphate. A dimethylallyl diphosphate-binding site is contributed by histidine 124. Residue histidine 124 coordinates isopentenyl diphosphate. Glutamate 126 acts as the Proton donor in catalysis. Residue threonine 169 coordinates (2E)-4-hydroxy-3-methylbut-2-enyl diphosphate. Cysteine 199 is a [4Fe-4S] cluster binding site. (2E)-4-hydroxy-3-methylbut-2-enyl diphosphate is bound by residues serine 227, serine 228, asparagine 229, and serine 271. The dimethylallyl diphosphate site is built by serine 227, serine 228, asparagine 229, and serine 271. Isopentenyl diphosphate-binding residues include serine 227, serine 228, asparagine 229, and serine 271.

The protein belongs to the IspH family. [4Fe-4S] cluster serves as cofactor.

The enzyme catalyses isopentenyl diphosphate + 2 oxidized [2Fe-2S]-[ferredoxin] + H2O = (2E)-4-hydroxy-3-methylbut-2-enyl diphosphate + 2 reduced [2Fe-2S]-[ferredoxin] + 2 H(+). The catalysed reaction is dimethylallyl diphosphate + 2 oxidized [2Fe-2S]-[ferredoxin] + H2O = (2E)-4-hydroxy-3-methylbut-2-enyl diphosphate + 2 reduced [2Fe-2S]-[ferredoxin] + 2 H(+). Its pathway is isoprenoid biosynthesis; dimethylallyl diphosphate biosynthesis; dimethylallyl diphosphate from (2E)-4-hydroxy-3-methylbutenyl diphosphate: step 1/1. It functions in the pathway isoprenoid biosynthesis; isopentenyl diphosphate biosynthesis via DXP pathway; isopentenyl diphosphate from 1-deoxy-D-xylulose 5-phosphate: step 6/6. In terms of biological role, catalyzes the conversion of 1-hydroxy-2-methyl-2-(E)-butenyl 4-diphosphate (HMBPP) into a mixture of isopentenyl diphosphate (IPP) and dimethylallyl diphosphate (DMAPP). Acts in the terminal step of the DOXP/MEP pathway for isoprenoid precursor biosynthesis. The sequence is that of 4-hydroxy-3-methylbut-2-enyl diphosphate reductase from Xanthomonas oryzae pv. oryzae (strain MAFF 311018).